We begin with the raw amino-acid sequence, 460 residues long: Probable fibrosin-1 (460 aa).

Lys-8 participates in a covalent cross-link: Glycyl lysine isopeptide (Lys-Gly) (interchain with G-Cter in SUMO2). Disordered stretches follow at residues 40 to 79, 205 to 311, and 406 to 460; these read SLQG…FRPP, FAQK…KEEA, and YSRL…RADR. A compositionally biased stretch (pro residues) spans 212 to 223; sequence GAPPAFASPPDP. Arg-229 and Arg-239 each carry asymmetric dimethylarginine. Over residues 248–272 the composition is skewed to basic and acidic residues; that stretch reads GSDKERPVERREPSITKEEKDRDLP. Ser-281 carries the post-translational modification Phosphoserine. The segment covering 288–311 has biased composition (basic and acidic residues); it reads RAGEEGPRPTKESVRVKEERKEEA. Residues 436-453 show a composition bias toward pro residues; sequence APPPLVPAPRPSSPPRGP.

The chain is Probable fibrosin-1 (FBRS) from Homo sapiens (Human).